Reading from the N-terminus, the 446-residue chain is Coiled-coil domain-containing protein 112 (446 aa).

2 coiled-coil regions span residues 23 to 116 (LEEL…RKID) and 219 to 400 (ERKK…NVSR). Disordered stretches follow at residues 247–277 (NNTPMLFHNKPEDNQKQKEEQRKKQKLAVEA) and 394–430 (VENNVSRDPSRLYKPTKGWEERTKKIGPTGSGPLLHI). Residues 255–268 (NKPEDNQKQKEEQR) are compositionally biased toward basic and acidic residues.

It is found in the cytoplasm. Its subcellular location is the cytoskeleton. The protein resides in the microtubule organizing center. It localises to the centrosome. The protein localises to the centriolar satellite. This Macaca fascicularis (Crab-eating macaque) protein is Coiled-coil domain-containing protein 112 (CCDC112).